A 766-amino-acid chain; its full sequence is Pentatricopeptide repeat-containing protein At5g28460 (766 aa).

PPR repeat units lie at residues 151–181 (TIVA…LDSN), 184–218 (NSQV…ESVF), 221–257 (NRIT…GVSP), 258–292 (NSVW…KTPL), 293–327 (EAPP…KIRP), 328–358 (DVVT…MRGK), 369–404 (DSIH…RCVP), 405–439 (NAVT…EIKP), 440–474 (NVVT…GVKG), 475–509 (NVVT…GCSP), 510–544 (DAKI…GFSL), 545–579 (DLLA…GKKP), 580–614 (DSIT…GLDP), 615–650 (TVTT…KVNP), 651–685 (NTVI…MVRP), and 686–720 (NVET…SCEP).

It belongs to the PPR family. P subfamily.

In Arabidopsis thaliana (Mouse-ear cress), this protein is Pentatricopeptide repeat-containing protein At5g28460.